Here is a 484-residue protein sequence, read N- to C-terminus: Zinc metalloproteinase-disintegrin BlatH1 (484 aa).

A signal peptide spans 1–20 (MIQVLLVTICLAALPYQGSS). The propeptide occupies 21–190 (IILESGNVND…KKASQSNLTP (170 aa)). A Pyrrolidone carboxylic acid (Glu) modification is found at Glu191. Residues 199-395 (KYVELVIVAD…QNSQCILNEP (197 aa)) enclose the Peptidase M12B domain. Glu202 lines the Ca(2+) pocket. The N-linked (GlcNAc...) asparagine glycan is linked to Asn259. Position 286 (Asp286) interacts with Ca(2+). A glycan (N-linked (GlcNAc...) asparagine) is linked at Asn297. Disulfide bonds link Cys310-Cys390, Cys350-Cys374, and Cys352-Cys357. His335 is a Zn(2+) binding site. Glu336 is an active-site residue. Residues His339 and His345 each coordinate Zn(2+). An N-linked (GlcNAc...) asparagine glycan is attached at Asn373. 7 residues coordinate Ca(2+): Cys390, Asn393, Val405, Asn408, Glu412, Glu415, and Asp418. The region spanning 403-484 (PPVCGNEILE…GQSADCPSNG (82 aa)) is the Disintegrin domain. 7 cysteine pairs are disulfide-bonded: Cys406-Cys425, Cys417-Cys435, Cys419-Cys430, Cys429-Cys452, Cys443-Cys449, Cys448-Cys473, and Cys461-Cys480. Positions 465–467 (TDN) match the TDN-tripeptide motif.

It belongs to the venom metalloproteinase (M12B) family. P-II subfamily. P-IIc sub-subfamily. As to quaternary structure, homodimer. Requires Zn(2+) as cofactor. In terms of processing, the N-terminus is blocked. Expressed by the venom gland.

The protein resides in the secreted. Its activity is regulated as follows. Platelet aggregation in inhibited by the metalloproteinase inhibitors EDTA and Batimastat. The hemorrhagic activity is not inhibited by the plasma proteinase inhibitor alpha2-macroglobulin, although the SVMP is able to cleave this plasma inhibitor, generating a 90 kDa product. In terms of biological role, snake venom zinc metalloprotease-disintegrin that hydrolyzes azocasein, gelatin and fibrinogen (Aalpha and Bbeta chains and partially gamma-chain), and exerts a potent local and systemic hemorrhagic activity in mice. It inhibits ADP- and collagen-induced human platelet aggregation (IC(50) = 0.3 uM and 0.7 uM for ADP and collagen, respectively). This inhibition is dependent of protease activity, and probably occurs through the degradation of an unknown platelet receptor. This Bothriechis lateralis (Side-striped palm pitviper) protein is Zinc metalloproteinase-disintegrin BlatH1.